Consider the following 272-residue polypeptide: D-aminoacyl-tRNA deacylase (272 aa).

In terms of assembly, monomer. Zn(2+) serves as cofactor.

The enzyme catalyses a D-aminoacyl-tRNA + H2O = a tRNA + a D-alpha-amino acid + H(+). The catalysed reaction is glycyl-tRNA(Ala) + H2O = tRNA(Ala) + glycine + H(+). It carries out the reaction D-tyrosyl-tRNA(Tyr) + H2O = D-tyrosine + tRNA(Tyr). In terms of biological role, D-aminoacyl-tRNA deacylase with broad substrate specificity. By recycling D-aminoacyl-tRNA to D-amino acids and free tRNA molecules, this enzyme counteracts the toxicity associated with the formation of D-aminoacyl-tRNA entities in vivo. Catalyzes the hydrolysis of D-tyrosyl-tRNA(Tyr) and D-aspartyl-tRNA(Asp). The protein is D-aminoacyl-tRNA deacylase of Pyrococcus abyssi (strain GE5 / Orsay).